We begin with the raw amino-acid sequence, 968 residues long: Chaperone protein ClpB3, chloroplastic (968 aa).

The N-terminal 67 residues, 1-67 (MATATTTATA…RLDHRPFVVR (67 aa)), are a transit peptide targeting the chloroplast. A Clp R domain is found at 78–222 (TQQEFTEMAW…KSAIESIRGK (145 aa)). Repeat stretches follow at residues 82–147 (FTEM…IQRQ) and 159–222 (LGRD…IRGK). The interval 237 to 485 (LEKYGKDLTA…KLKMEITSKP (249 aa)) is i. 282–289 (GEPGVGKT) provides a ligand contact to ATP. Residues 488 to 606 (LDELDRSVIK…NEYLSSGKSM (119 aa)) are a coiled coil. The segment at 611 to 802 (VLGSDIAEIV…VIIMTSNVGS (192 aa)) is II. 685 to 692 (GPTGVGKT) is an ATP binding site.

This sequence belongs to the ClpA/ClpB family.

The protein resides in the plastid. It localises to the chloroplast. In terms of biological role, molecular chaperone essential for chloroplast development and seedling viability. Mediates internal thylakoid membrane formation and confers thermotolerance to chloroplasts during heat stress. The protein is Chaperone protein ClpB3, chloroplastic (CLPB3) of Arabidopsis thaliana (Mouse-ear cress).